Reading from the N-terminus, the 151-residue chain is Putative pre-16S rRNA nuclease (151 aa).

It belongs to the YqgF nuclease family.

The protein resides in the cytoplasm. Its function is as follows. Could be a nuclease involved in processing of the 5'-end of pre-16S rRNA. This chain is Putative pre-16S rRNA nuclease, found in Neisseria gonorrhoeae (strain ATCC 700825 / FA 1090).